Here is a 261-residue protein sequence, read N- to C-terminus: Proteasome subunit alpha (261 aa).

The interval 242–261 (NEENKKEEENREETKEKQEE) is disordered.

Belongs to the peptidase T1A family. In terms of assembly, the 20S proteasome core is composed of 14 alpha and 14 beta subunits that assemble into four stacked heptameric rings, resulting in a barrel-shaped structure. The two inner rings, each composed of seven catalytic beta subunits, are sandwiched by two outer rings, each composed of seven alpha subunits. The catalytic chamber with the active sites is on the inside of the barrel. Has a gated structure, the ends of the cylinder being occluded by the N-termini of the alpha-subunits. Is capped at one or both ends by the proteasome regulatory ATPase, PAN.

It localises to the cytoplasm. The formation of the proteasomal ATPase PAN-20S proteasome complex, via the docking of the C-termini of PAN into the intersubunit pockets in the alpha-rings, triggers opening of the gate for substrate entry. Interconversion between the open-gate and close-gate conformations leads to a dynamic regulation of the 20S proteasome proteolysis activity. Component of the proteasome core, a large protease complex with broad specificity involved in protein degradation. The M.jannaschii proteasome is able to cleave oligopeptides after Glu, Asp, Tyr, Phe, Trp, slightly after Arg, but not after Ala. Thus, displays caspase-like and chymotrypsin-like activities and low level of trypsin-like activity. This chain is Proteasome subunit alpha, found in Methanocaldococcus jannaschii (strain ATCC 43067 / DSM 2661 / JAL-1 / JCM 10045 / NBRC 100440) (Methanococcus jannaschii).